Here is a 351-residue protein sequence, read N- to C-terminus: UDP-N-acetylenolpyruvoylglucosamine reductase (351 aa).

Residues G11–I213 enclose the FAD-binding PCMH-type domain. Residue R158 is part of the active site. S239 acts as the Proton donor in catalysis. The active site involves E343.

The protein belongs to the MurB family. FAD is required as a cofactor.

The protein localises to the cytoplasm. The catalysed reaction is UDP-N-acetyl-alpha-D-muramate + NADP(+) = UDP-N-acetyl-3-O-(1-carboxyvinyl)-alpha-D-glucosamine + NADPH + H(+). It participates in cell wall biogenesis; peptidoglycan biosynthesis. Its function is as follows. Cell wall formation. The sequence is that of UDP-N-acetylenolpyruvoylglucosamine reductase from Tropheryma whipplei (strain TW08/27) (Whipple's bacillus).